The sequence spans 222 residues: Eukaryotic translation initiation factor 3 subunit K (222 aa).

In terms of domain architecture, PCI spans 46 to 208 (YDLEANLAVL…KIKTKNITEK (163 aa)).

It belongs to the eIF-3 subunit K family. Component of the eukaryotic translation initiation factor 3 (eIF-3) complex. The eIF-3 complex interacts with pix.

The protein localises to the cytoplasm. Its function is as follows. Component of the eukaryotic translation initiation factor 3 (eIF-3) complex, which is involved in protein synthesis of a specialized repertoire of mRNAs and, together with other initiation factors, stimulates binding of mRNA and methionyl-tRNAi to the 40S ribosome. The eIF-3 complex specifically targets and initiates translation of a subset of mRNAs involved in cell proliferation. The sequence is that of Eukaryotic translation initiation factor 3 subunit K from Drosophila mojavensis (Fruit fly).